The primary structure comprises 181 residues: uncharacterized protein (181 aa).

The Cytoplasmic segment spans residues Met-1–His-14. A helical transmembrane segment spans residues Phe-15–Ala-35. Residues Ser-36–Val-58 are Extracellular-facing. The helical transmembrane segment at Leu-59–Phe-79 threads the bilayer. The Cytoplasmic segment spans residues Thr-80–Leu-84. Residues Ser-85–Leu-105 traverse the membrane as a helical segment. Residues Glu-106–Asp-116 are Extracellular-facing. Residues Leu-117–Leu-137 form a helical membrane-spanning segment. Residues Ser-138–Ser-153 are Cytoplasmic-facing. The helical transmembrane segment at Ser-154 to Gly-174 threads the bilayer. Topologically, residues Lys-175–Ser-181 are extracellular.

The protein localises to the membrane. This is an uncharacterized protein from Saccharomyces cerevisiae (strain ATCC 204508 / S288c) (Baker's yeast).